Reading from the N-terminus, the 440-residue chain is Elongation factor 1-gamma (440 aa).

An N-acetylalanine modification is found at Ala-2. Residues 2-87 enclose the GST N-terminal domain; the sequence is AAGTLYTYPE…YVSNEELRGS (86 aa). The 129-residue stretch at 88–216 folds into the GST C-terminal domain; that stretch reads TPEAAAQVVQ…VKLCEKMAQF (129 aa). N6-acetyllysine occurs at positions 147 and 212. The segment covering 221-257 has biased composition (basic and acidic residues); the sequence is FAESQPKKDTPRKEKGSREEKLKPQAERKEGKEEKKA. Residues 221–267 form a disordered region; it reads FAESQPKKDTPRKEKGSREEKLKPQAERKEGKEEKKAAAPAPEEELD. Lys-256 is covalently cross-linked (Glycyl lysine isopeptide (Lys-Gly) (interchain with G-Cter in SUMO1)). Residues 279-440 form the EF-1-gamma C-terminal domain; it reads AKDPFAHLPK…KAFNQGKIFK (162 aa). Residue Lys-288 forms a Glycyl lysine isopeptide (Lys-Gly) (interchain with G-Cter in SUMO2) linkage. N6-acetyllysine is present on Lys-404. Lys-437 is modified (N6-acetyllysine; alternate). An N6-malonyllysine; alternate modification is found at Lys-437.

In terms of assembly, EF-1 is composed of four subunits: alpha, beta, delta, and gamma.

Its function is as follows. Probably plays a role in anchoring the complex to other cellular components. This Bos taurus (Bovine) protein is Elongation factor 1-gamma (EEF1G).